We begin with the raw amino-acid sequence, 101 residues long: Phosphoribosyl-AMP cyclohydrolase (101 aa).

D71 is a Mg(2+) binding site. C72 is a Zn(2+) binding site. The Mg(2+) site is built by D73 and D75. Zn(2+) is bound by residues C88 and C95.

This sequence belongs to the PRA-CH family. Homodimer. It depends on Mg(2+) as a cofactor. Zn(2+) serves as cofactor.

Its subcellular location is the cytoplasm. It catalyses the reaction 1-(5-phospho-beta-D-ribosyl)-5'-AMP + H2O = 1-(5-phospho-beta-D-ribosyl)-5-[(5-phospho-beta-D-ribosylamino)methylideneamino]imidazole-4-carboxamide. Its pathway is amino-acid biosynthesis; L-histidine biosynthesis; L-histidine from 5-phospho-alpha-D-ribose 1-diphosphate: step 3/9. Catalyzes the hydrolysis of the adenine ring of phosphoribosyl-AMP. This chain is Phosphoribosyl-AMP cyclohydrolase, found in Bacillus cereus (strain ATCC 14579 / DSM 31 / CCUG 7414 / JCM 2152 / NBRC 15305 / NCIMB 9373 / NCTC 2599 / NRRL B-3711).